We begin with the raw amino-acid sequence, 197 residues long: MHYFSEKPTTKSDVKIVEDILRGKKLKFKTDSGVFSYGKVDKGTKILVENVVVDKDDDILDLGCGYGVIGIALADEVKSTTMADINRRAIKLAKENIKLNNLDNYDIRVVHSDLYENVKDRKYNKIITNPPIRAGKEVLHRIIEEGKELLKDNGEIWVVIQTKQGAKSLAKYMKDVFGNVETVTIKGGYRVLKSKKL.

Residues Gly63–Gly67, Asp84, and Asn129 each bind S-adenosyl-L-methionine. Asn129 to Ile132 contributes to the substrate binding site.

This sequence belongs to the methyltransferase superfamily.

Functionally, probable methyltransferase that uses S-adenosylmethionine as the methyl donor. Binds neither NAD nor NADP in vitro. This is Probable S-adenosylmethionine-dependent methyltransferase MJ0882 from Methanocaldococcus jannaschii (strain ATCC 43067 / DSM 2661 / JAL-1 / JCM 10045 / NBRC 100440) (Methanococcus jannaschii).